The following is a 1291-amino-acid chain: DNA-directed RNA polymerase subunit beta' (1291 aa).

4 residues coordinate Zn(2+): C60, C62, C75, and C78. D535, D537, and D539 together coordinate Mg(2+). Zn(2+) is bound by residues C874, C951, C958, and C961.

Belongs to the RNA polymerase beta' chain family. The RNAP catalytic core consists of 2 alpha, 1 beta, 1 beta' and 1 omega subunit. When a sigma factor is associated with the core the holoenzyme is formed, which can initiate transcription. Requires Mg(2+) as cofactor. It depends on Zn(2+) as a cofactor.

It carries out the reaction RNA(n) + a ribonucleoside 5'-triphosphate = RNA(n+1) + diphosphate. Functionally, DNA-dependent RNA polymerase catalyzes the transcription of DNA into RNA using the four ribonucleoside triphosphates as substrates. In Leifsonia xyli subsp. xyli (strain CTCB07), this protein is DNA-directed RNA polymerase subunit beta'.